A 942-amino-acid chain; its full sequence is Lambda-carrageenase (942 aa).

A signal peptide spans 1–25; the sequence is MKIKILSAMIASSLLIGCVIPTVKA.

Monomer.

The protein localises to the secreted. The catalysed reaction is Endohydrolysis of (1-&gt;4)-beta-linkages in the backbone of lambda-carrageenan, resulting in the tetrasaccharide alpha-D-Galp2,6S2-(1-&gt;3)-beta-D-Galp2S-(1-&gt;4)-alpha-D-Galp2,6S2-(1-&gt;3)-D-Galp2S.. Functionally, hydrolyzes lambda-carrageenan with inversion of anomeric configuration. Does not hydrolyze iota- and kappa-carrageenans, agarose or porphyran. The chain is Lambda-carrageenase from Pseudoalteromonas sp.